A 166-amino-acid chain; its full sequence is MANAQATEEEIEIVEEGTTAPQVTEPPLPATIAGLAALLEIPLDDCLVPCNFCGKFLSHLEACEFDDKRLSLIWKGHLVYACCRWCCTATATFEFNEFYEHTVTGREIEFVTGKSVFDIDVRCQNCMRYLDSIEKLDICGRRLPFHKVRDSWKGICRLCKHFYNDW.

Zinc fingers lie at residues 50 to 86 (CNFCGKFLSHLEACEFDDKRLSLIWKGHLVYACCRWC) and 123 to 159 (CQNCMRYLDSIEKLDICGRRLPFHKVRDSWKGICRLC).

This sequence belongs to the papillomaviridae E6 protein family. As to quaternary structure, forms homodimers. Interacts with ubiquitin-protein ligase UBE3A/E6-AP; this interaction stimulates UBE3A ubiquitin activity. Interacts with host BAK1.

The protein localises to the host cytoplasm. It localises to the host nucleus. In terms of biological role, plays a major role in the induction and maintenance of cellular transformation. E6 associates with host UBE3A/E6-AP ubiquitin-protein ligase and modulates its activity. Protects host keratinocytes from apoptosis by mediating the degradation of host BAK1. May also inhibit host immune response. The protein is Protein E6 of Homo sapiens (Human).